Here is a 206-residue protein sequence, read N- to C-terminus: Small ribosomal subunit protein uS4 (206 aa).

One can recognise an S4 RNA-binding domain in the interval 96-158 (SRLDNVVYRM…AKGQLRIKGA (63 aa)).

It belongs to the universal ribosomal protein uS4 family. Part of the 30S ribosomal subunit. Contacts protein S5. The interaction surface between S4 and S5 is involved in control of translational fidelity.

One of the primary rRNA binding proteins, it binds directly to 16S rRNA where it nucleates assembly of the body of the 30S subunit. Functionally, with S5 and S12 plays an important role in translational accuracy. In Coxiella burnetii (strain CbuG_Q212) (Coxiella burnetii (strain Q212)), this protein is Small ribosomal subunit protein uS4.